Consider the following 362-residue polypeptide: Solute carrier family 25 member 3 (362 aa).

A mitochondrion-targeting transit peptide spans 1–49 (MYSSVVHLARANPFNAPHLQLVHDGLAGPRSDPAGPPGPPRRSRNLAAA). At 50–63 (AVEEQYSCDYGSGR) the chain is on the mitochondrial intermembrane side. 3 Solcar repeats span residues 63-147 (RFFI…FKVL), 160-244 (WRTS…TVEA), and 261-339 (EQLV…VKVY). A helical membrane pass occupies residues 64-86 (FFILCGLGGIISCGTTHTALVPL). Residues 87–121 (DLVKCRMQVDPQKYKSIFNGFSVTLKEDGFRGLAK) lie on the Mitochondrial matrix side of the membrane. Lys-99 carries the N6-acetyllysine modification. The residue at position 112 (Lys-112) is an N6-methyllysine. A helical membrane pass occupies residues 122-141 (GWAPTFIGYSLQGLCKFGFY). Over 142-161 (EVFKVLYSNMLGEENAYLWR) the chain is Mitochondrial intermembrane. Residues 162-183 (TSLYLAASASAEFFADIALAPM) form a helical membrane-spanning segment. The Mitochondrial matrix portion of the chain corresponds to 184-218 (EAAKVRIQTQPGYANTLRDAAPKMYKEEGLKAFYK). Tyr-196 carries the phosphotyrosine modification. Lys-209 is subject to N6-acetyllysine. Residues 219 to 238 (GVAPLWMRQIPYTMMKFACF) form a helical membrane-spanning segment. The Mitochondrial intermembrane segment spans residues 239–261 (ERTVEALYKFVVPKPRSECSKPE). Residues 262–284 (QLVVTFVAGYIAGVFCAIVSHPA) form a helical membrane-spanning segment. Over 285–314 (DSVVSVLNKEKGSSASEVLKRLGFRGVWKG) the chain is Mitochondrial matrix. A helical transmembrane segment spans residues 315–333 (LFARIIMIGTLTALQWFIY). The Mitochondrial intermembrane segment spans residues 334–362 (DSVKVYFRLPRPPPPEMPESLKKKLGYTQ).

This sequence belongs to the mitochondrial carrier (TC 2.A.29) family. As to quaternary structure, interacts with PPIF; the interaction is impaired by CsA. In terms of tissue distribution, expressed in heart, diaphragm and skeletal muscle (at protein level). Not detected in liver, lung, brain, and kidney (at protein level). Ubiquitous (at protein level).

It localises to the mitochondrion inner membrane. The catalysed reaction is phosphate(in) + H(+)(in) = phosphate(out) + H(+)(out). Its activity is regulated as follows. Up-regulated in the presence of cardiolipin. Functionally, inorganic ion transporter that transports phosphate or copper ions across the mitochondrial inner membrane into the matrix compartment. Mediates proton-coupled symport of phosphate ions necessary for mitochondrial oxidative phosphorylation of ADP to ATP. Transports copper ions probably in the form of anionic copper(I) complexes to maintain mitochondrial matrix copper pool and to supply copper for cytochrome C oxidase complex assembly. May also play a role in regulation of the mitochondrial permeability transition pore (mPTP). The chain is Solute carrier family 25 member 3 from Bos taurus (Bovine).